Consider the following 234-residue polypeptide: Heme-copper oxidase subunit 2 (234 aa).

2 helical membrane-spanning segments follow: residues 13-33 and 72-92; these read LFLL…AFFI and LLFV…DETL. Cu cation is bound by residues histidine 151, cysteine 188, cysteine 192, and histidine 196.

This sequence belongs to the cytochrome c oxidase subunit 2 family.

The protein resides in the cell membrane. The polypeptide is Heme-copper oxidase subunit 2 (aoxA) (Aeropyrum pernix (strain ATCC 700893 / DSM 11879 / JCM 9820 / NBRC 100138 / K1)).